Here is a 443-residue protein sequence, read N- to C-terminus: Threonine/serine transporter TdcC (443 aa).

11 helical membrane passes run 22–42 (TTWT…FFPI), 44–64 (AGFG…PIAF), 97–117 (GVVI…IYGV), 135–155 (ALNR…IIWF), 163–183 (VMSF…LSLI), 207–227 (ILVT…FSPI), 259–279 (ASIL…FALS), 319–339 (ASII…LGTL), 366–386 (LSMV…PNIL), 389–409 (IEAM…MYAI), and 422–442 (IDNV…VYKV).

Belongs to the amino acid/polyamine transporter 2 family. SdaC/TdcC subfamily.

The protein localises to the cell inner membrane. It carries out the reaction L-threonine(in) + H(+)(in) = L-threonine(out) + H(+)(out). The enzyme catalyses L-serine(in) + H(+)(in) = L-serine(out) + H(+)(out). In terms of biological role, involved in the import of threonine and serine into the cell, with the concomitant import of a proton (symport system). This chain is Threonine/serine transporter TdcC, found in Escherichia fergusonii (strain ATCC 35469 / DSM 13698 / CCUG 18766 / IAM 14443 / JCM 21226 / LMG 7866 / NBRC 102419 / NCTC 12128 / CDC 0568-73).